The following is a 963-amino-acid chain: MHC class II regulatory factor RFX1 (963 aa).

4 disordered regions span residues M1–P88, A105–Q126, Q174–A218, and S361–G392. Pro residues predominate over residues P20–A41. Positions A42–Q67 are enriched in low complexity. Phosphoserine is present on S54. Residues A75 to S87 show a composition bias toward pro residues. 3 stretches are compositionally biased toward polar residues: residues E107–S119, K181–H196, and V204–A214. Over residues S361–V372 the composition is skewed to low complexity. Residues G373–G392 are compositionally biased toward gly residues. The RFX-type winged-helix DNA-binding region spans T423–A498. The segment at S899 to A948 is disordered. Acidic residues predominate over residues D906 to P922. A compositionally biased stretch (low complexity) spans E932 to L947. Phosphoserine is present on residues S962 and S963.

Belongs to the RFX family. Homodimer; binds DNA as a homodimer. Heterodimer; heterodimerizes with RFX2 and RFX3.

The protein resides in the nucleus. Its function is as follows. Regulatory factor essential for MHC class II genes expression. Binds to the X boxes of MHC class II genes. The polypeptide is MHC class II regulatory factor RFX1 (Rfx1) (Mus musculus (Mouse)).